Here is a 111-residue protein sequence, read N- to C-terminus: Large ribosomal subunit protein uL22 (111 aa).

The protein belongs to the universal ribosomal protein uL22 family. In terms of assembly, part of the 50S ribosomal subunit.

Functionally, this protein binds specifically to 23S rRNA; its binding is stimulated by other ribosomal proteins, e.g. L4, L17, and L20. It is important during the early stages of 50S assembly. It makes multiple contacts with different domains of the 23S rRNA in the assembled 50S subunit and ribosome. The globular domain of the protein is located near the polypeptide exit tunnel on the outside of the subunit, while an extended beta-hairpin is found that lines the wall of the exit tunnel in the center of the 70S ribosome. The protein is Large ribosomal subunit protein uL22 of Geotalea daltonii (strain DSM 22248 / JCM 15807 / FRC-32) (Geobacter daltonii).